Here is a 229-residue protein sequence, read N- to C-terminus: Nectarin-1 (229 aa).

The N-terminal stretch at 1–32 (MAAFGINSKIFQSMEMAILFLLAISIDRYCFA) is a signal peptide. A disulfide bridge links cysteine 42 with cysteine 57. The N-linked (GlcNAc...) asparagine glycan is linked to asparagine 60. Positions 69 to 217 (LAISKPGATN…TFQINTEDVQ (149 aa)) constitute a Cupin type-1 domain. Histidine 117, histidine 119, glutamate 124, and histidine 163 together coordinate Mn(2+).

In terms of assembly, monomer. In the absence of manganese, it forms tetrameric and pentameric forms which show superoxide dismutase activity. It depends on Mn(2+) as a cofactor. In terms of tissue distribution, nectary tissues and to a lower level ovary. Not detected in petals, stems, leaves, roots or other floral tissues.

Its subcellular location is the secreted. It is found in the extracellular space. The protein resides in the apoplast. It carries out the reaction 2 superoxide + 2 H(+) = H2O2 + O2. In terms of biological role, may interact with bacterial adhesins thereby protecting the reproductive tissues from microbial attack. Has no oxalate oxidase activity. The protein is Nectarin-1 (NECI) of Nicotiana langsdorffii x Nicotiana sanderae (Ornamental tobacco).